The chain runs to 393 residues: Histidinol dehydrogenase (393 aa).

NAD(+)-binding residues include Tyr112, Gln171, and Asn194. Substrate contacts are provided by Thr217, Gln239, and His242. The Zn(2+) site is built by Gln239 and His242. Residues Glu293 and His294 each act as proton acceptor in the active site. His294, Asp326, Glu379, and His384 together coordinate substrate. Zn(2+) is bound at residue Asp326. Position 384 (His384) interacts with Zn(2+).

This sequence belongs to the histidinol dehydrogenase family. Zn(2+) serves as cofactor.

It carries out the reaction L-histidinol + 2 NAD(+) + H2O = L-histidine + 2 NADH + 3 H(+). Its pathway is amino-acid biosynthesis; L-histidine biosynthesis; L-histidine from 5-phospho-alpha-D-ribose 1-diphosphate: step 9/9. In terms of biological role, catalyzes the sequential NAD-dependent oxidations of L-histidinol to L-histidinaldehyde and then to L-histidine. In Sulfolobus acidocaldarius (strain ATCC 33909 / DSM 639 / JCM 8929 / NBRC 15157 / NCIMB 11770), this protein is Histidinol dehydrogenase.